The following is a 244-amino-acid chain: Cysteine-rich secretory protein 2 (244 aa).

Residues 1–21 (MALLPVVVFLITMLLPCVLTN) form the signal peptide. One can recognise an SCP domain in the interval 43-170 (NKHNQLRKSV…SLKYYYVCQY (128 aa)). 5 cysteine pairs are disulfide-bonded: Cys190–Cys197, Cys193–Cys202, Cys206–Cys239, Cys215–Cys233, and Cys224–Cys237. Positions 206–239 (CEYEDLLSNCESLKNTAGCEHQLLVEKCKATCRC) constitute a ShKT domain.

Belongs to the CRISP family. Interacts with NSUN4 isoform 3. Testis.

The protein resides in the secreted. May regulate some ion channels' activity and thereby regulate calcium fluxes during sperm capacitation. The polypeptide is Cysteine-rich secretory protein 2 (CRISP2) (Cavia porcellus (Guinea pig)).